A 160-amino-acid polypeptide reads, in one-letter code: Putative UPF0479 protein YNL339W-B (160 aa).

The next 2 membrane-spanning stretches (helical) occupy residues 39–59 (IVFCLPFFPALFFVPVQKVLQ) and 136–156 (VPMIWLDVFQVFFVFLVISQH).

This sequence belongs to the UPF0479 family.

It is found in the membrane. The chain is Putative UPF0479 protein YNL339W-B from Saccharomyces cerevisiae (strain ATCC 204508 / S288c) (Baker's yeast).